Consider the following 23-residue polypeptide: 48 kDa cell wall protein (23 aa).

It localises to the secreted. The protein localises to the cell wall. This Nicotiana tabacum (Common tobacco) protein is 48 kDa cell wall protein.